The following is a 493-amino-acid chain: Cobyric acid synthase (493 aa).

In terms of domain architecture, GATase cobBQ-type spans 261-455 (HTRIAVVAYP…LHGLFEDAAV (195 aa)). Cys-342 (nucleophile) is an active-site residue. The active site involves His-447.

This sequence belongs to the CobB/CobQ family. CobQ subfamily.

It participates in cofactor biosynthesis; adenosylcobalamin biosynthesis. Its function is as follows. Catalyzes amidations at positions B, D, E, and G on adenosylcobyrinic A,C-diamide. NH(2) groups are provided by glutamine, and one molecule of ATP is hydrogenolyzed for each amidation. The protein is Cobyric acid synthase of Acidovorax sp. (strain JS42).